We begin with the raw amino-acid sequence, 42 residues long: Omega-theraphotoxin-Asp3a (42 aa).

3 disulfide bridges follow: C1–C16, C8–C21, and C15–C30.

Belongs to the neurotoxin 14 (magi-1) family. 08 (Ltx-4) subfamily. As to expression, expressed by the venom gland.

Its subcellular location is the secreted. Its function is as follows. Inhibits voltage-gated calcium channels (Cav) in rat cerebellar granule cells. In Aphonopelma sp. (American tarantula), this protein is Omega-theraphotoxin-Asp3a.